The primary structure comprises 180 residues: ATP-dependent protease subunit HslV (180 aa).

The active site involves T9. Na(+)-binding residues include A164, C167, and T170.

It belongs to the peptidase T1B family. HslV subfamily. In terms of assembly, a double ring-shaped homohexamer of HslV is capped on each side by a ring-shaped HslU homohexamer. The assembly of the HslU/HslV complex is dependent on binding of ATP.

It localises to the cytoplasm. It carries out the reaction ATP-dependent cleavage of peptide bonds with broad specificity.. Allosterically activated by HslU binding. Its function is as follows. Protease subunit of a proteasome-like degradation complex believed to be a general protein degrading machinery. In Leptospira interrogans serogroup Icterohaemorrhagiae serovar Lai (strain 56601), this protein is ATP-dependent protease subunit HslV.